Reading from the N-terminus, the 189-residue chain is Chitin synthase 1 (189 aa).

Belongs to the chitin synthase family. Class I subfamily.

The protein resides in the cell membrane. It catalyses the reaction [(1-&gt;4)-N-acetyl-beta-D-glucosaminyl](n) + UDP-N-acetyl-alpha-D-glucosamine = [(1-&gt;4)-N-acetyl-beta-D-glucosaminyl](n+1) + UDP + H(+). In terms of biological role, polymerizes chitin, a structural polymer of the cell wall and septum, by transferring the sugar moiety of UDP-GlcNAc to the non-reducing end of the growing chitin polymer. The polypeptide is Chitin synthase 1 (chs1) (Aspergillus niger).